A 121-amino-acid chain; its full sequence is MARIAGVDIPRDKRVVISLTYVFGIGRTTAEKIITEAGISSETRVRDLSEDELGRIRDIIDRIKVEGDLRREVSLNIKRLMEIGSYRGLRHRRGLPVRGQNSKNNARTRKGPRRTVANKKK.

Residues 91–121 (HRRGLPVRGQNSKNNARTRKGPRRTVANKKK) are disordered. The span at 106–121 (ARTRKGPRRTVANKKK) shows a compositional bias: basic residues.

The protein belongs to the universal ribosomal protein uS13 family. Part of the 30S ribosomal subunit. Forms a loose heterodimer with protein S19. Forms two bridges to the 50S subunit in the 70S ribosome.

In terms of biological role, located at the top of the head of the 30S subunit, it contacts several helices of the 16S rRNA. In the 70S ribosome it contacts the 23S rRNA (bridge B1a) and protein L5 of the 50S subunit (bridge B1b), connecting the 2 subunits; these bridges are implicated in subunit movement. Contacts the tRNAs in the A and P-sites. In Bacillus mycoides (strain KBAB4) (Bacillus weihenstephanensis), this protein is Small ribosomal subunit protein uS13.